The primary structure comprises 443 residues: Regulator of rDNA transcription protein 5 (443 aa).

Residues 4 to 87 (SRIYIANVSY…RVLRVRTHNP (84 aa)) enclose the RRM 1 domain. The interval 112–140 (EDTAASGERAPTDAQDHPDQPQEGHMSPD) is disordered. Residues 121–133 (APTDAQDHPDQPQ) are compositionally biased toward basic and acidic residues. Positions 183–268 (DTVYCAFLPK…TKISIKPAYI (86 aa)) constitute an RRM 2 domain. The segment at 408–443 (GMTKQSVGSNKKKNKKKKSARGKEVRKLSVSNTTTQ) is disordered. Residues 417–427 (NKKKNKKKKSA) show a composition bias toward basic residues.

The protein belongs to the RRT5 family.

Its function is as follows. May be involved in the modulation of rDNA transcription. The sequence is that of Regulator of rDNA transcription protein 5 (RRT5) from Candida glabrata (strain ATCC 2001 / BCRC 20586 / JCM 3761 / NBRC 0622 / NRRL Y-65 / CBS 138) (Yeast).